We begin with the raw amino-acid sequence, 61 residues long: Probable tautomerase SERP0934 (61 aa).

P2 (proton acceptor; via imino nitrogen) is an active-site residue.

This sequence belongs to the 4-oxalocrotonate tautomerase family.

The protein is Probable tautomerase SERP0934 of Staphylococcus epidermidis (strain ATCC 35984 / DSM 28319 / BCRC 17069 / CCUG 31568 / BM 3577 / RP62A).